A 591-amino-acid polypeptide reads, in one-letter code: Aspartate--tRNA ligase (591 aa).

Glu173 contributes to the L-aspartate binding site. The aspartate stretch occupies residues 197 to 200; the sequence is QLFK. Position 219 (Arg219) interacts with L-aspartate. ATP is bound by residues 219-221 and Gln228; that span reads RDE. Position 448 (His448) interacts with L-aspartate. Glu482 lines the ATP pocket. Arg489 contacts L-aspartate. 534–537 serves as a coordination point for ATP; the sequence is GLDR.

This sequence belongs to the class-II aminoacyl-tRNA synthetase family. Type 1 subfamily. Homodimer.

The protein resides in the cytoplasm. The enzyme catalyses tRNA(Asp) + L-aspartate + ATP = L-aspartyl-tRNA(Asp) + AMP + diphosphate. Its function is as follows. Catalyzes the attachment of L-aspartate to tRNA(Asp) in a two-step reaction: L-aspartate is first activated by ATP to form Asp-AMP and then transferred to the acceptor end of tRNA(Asp). In Shewanella amazonensis (strain ATCC BAA-1098 / SB2B), this protein is Aspartate--tRNA ligase.